Consider the following 86-residue polypeptide: UPF0457 protein SAUSA300_2132 (86 aa).

The protein belongs to the UPF0457 family.

The sequence is that of UPF0457 protein SAUSA300_2132 from Staphylococcus aureus (strain USA300).